The primary structure comprises 415 residues: uncharacterized protein (415 aa).

Over residues 179–199 (SPAPCSPAPGSPPPPAPPAAP) the composition is skewed to pro residues. The interval 179 to 200 (SPAPCSPAPGSPPPPAPPAAPA) is disordered.

It belongs to the herpesviridae BTRF1 family.

This is an uncharacterized protein from Equus caballus (Horse).